Consider the following 130-residue polypeptide: Ribonuclease P protein component 2 (130 aa).

This sequence belongs to the eukaryotic/archaeal RNase P protein component 2 family. As to quaternary structure, consists of a catalytic RNA component and at least 4-5 protein subunits.

The protein localises to the cytoplasm. The enzyme catalyses Endonucleolytic cleavage of RNA, removing 5'-extranucleotides from tRNA precursor.. Functionally, part of ribonuclease P, a protein complex that generates mature tRNA molecules by cleaving their 5'-ends. The sequence is that of Ribonuclease P protein component 2 from Methanococcus maripaludis (strain C6 / ATCC BAA-1332).